The sequence spans 477 residues: Aspartyl/glutamyl-tRNA(Asn/Gln) amidotransferase subunit B (477 aa).

It belongs to the GatB/GatE family. GatB subfamily. Heterotrimer of A, B and C subunits.

The catalysed reaction is L-glutamyl-tRNA(Gln) + L-glutamine + ATP + H2O = L-glutaminyl-tRNA(Gln) + L-glutamate + ADP + phosphate + H(+). The enzyme catalyses L-aspartyl-tRNA(Asn) + L-glutamine + ATP + H2O = L-asparaginyl-tRNA(Asn) + L-glutamate + ADP + phosphate + 2 H(+). Functionally, allows the formation of correctly charged Asn-tRNA(Asn) or Gln-tRNA(Gln) through the transamidation of misacylated Asp-tRNA(Asn) or Glu-tRNA(Gln) in organisms which lack either or both of asparaginyl-tRNA or glutaminyl-tRNA synthetases. The reaction takes place in the presence of glutamine and ATP through an activated phospho-Asp-tRNA(Asn) or phospho-Glu-tRNA(Gln). The chain is Aspartyl/glutamyl-tRNA(Asn/Gln) amidotransferase subunit B from Streptococcus gordonii (strain Challis / ATCC 35105 / BCRC 15272 / CH1 / DL1 / V288).